The following is a 983-amino-acid chain: Nuclear factor NF-kappa-B p105 subunit (983 aa).

An RHD domain is found at 47–372 (PYLQIIEQPK…EVQRKRQKLM (326 aa)). At Cys-66 the chain carries S-nitrosocysteine. Ser-342 is modified (phosphoserine; by PKA). A Nuclear localization signal motif is present at residues 365–370 (QRKRQK). Residues 377 to 397 (DGYGGGSGAGGGGMFGGGGGG) are GRR. The disordered stretch occupies residues 423–454 (KSNAGMKHELSNSTVKKDEESSDKQSDKWDTK). Basic and acidic residues predominate over residues 428-454 (MKHELSNSTVKKDEESSDKQSDKWDTK). ANK repeat units lie at residues 540–569 (NGDNVLHLSIIHLHRELVKNLLEVMPDMNY), 579–608 (LYQTPLHLAVITKQAEVVEDLLKAGANVNL), 612–641 (HGNSVLHLAAAEGDDKILSLLLKHQKASSM), 648–677 (EGLSAIHMVVTANSLSCLKLLIAAGVDVNA), 682–712 (SGRTALHLAVEQENVPLAGCLLLEGDADVDS), 716–745 (DGTTPLHIAAGRGFTKLAAVLKAAGADPHV), and 769–799 (PGTTPLDMAANWEVYDILNGKPYIAAAAVSE). The region spanning 804–891 (QGPLRELNES…EAIEVIQKAL (88 aa)) is the Death domain. Ser-938 bears the Phosphoserine mark.

Active NF-kappa-B is a heterodimer of an about 50 kDa DNA-binding subunit and the weak DNA-binding subunit p65. Two heterodimers might form a labile tetramer. Generation of the NF-kappa-B p50 (Nuclear factor NF-kappa-B p50 subunit) transcription factor takes place both cotranslationally and post-translationally via non-mutually exclusive mechanisms. A cotranslational processing allows the production of both p50 and p105 (Nuclear factor NF-kappa-B p105 subunit) from a single NFKB1 mRNA. While translation occurs, the particular unfolded structure after the GRR repeat region acts as a substrate for the proteasome, promoting degradation of the C-terminus. The GRR acts as a proteasomal 'stop signal', protecting the region upstream of the GRR from degradation and promoting generation of p50. It is unclear if limited proteasome degradation during cotranslational processing depends on ubiquitination. NF-kappa-B p50 is also generated post-translationally following ubiquitination by the KPC complex, leading to limited processing by the proteasome downstream of the GRR region, thereby generating p50. In terms of processing, phosphorylation at the C-terminus by IKBKB/IKKB acts as a signal for ubiquitination and promotes either complete degradation or processing to generate the NF-kappa-B p50 (Nuclear factor NF-kappa-B p50 subunit). Phosphorylation at Ser-938 are required for BTRC/BTRCP-mediated ubiquitination and proteolysis. Phosphorylation at Ser-938 is also required for ubiquitination by the KPC complex and limited processing to generate NF-kappa-B p50 (Nuclear factor NF-kappa-B p50 subunit). Post-translationally, polyubiquitinated at multiple Lys residues in the C-terminus. Polyubiquitinated by the SCF(FBXW11) and SCF(BTRC) complexes following phosphorylation at Ser-938, leading to its complete degradation. In contrast, polyubiquitination by the KPC complex following phosphorylation at Ser-938 leads to limited proteosomal processing and generation of the active NF-kappa-B p50 (Nuclear factor NF-kappa-B p50 subunit). S-nitrosylation of Cys-66 affects DNA binding. In terms of processing, the covalent modification of cysteine by 15-deoxy-Delta12,14-prostaglandin-J2 is autocatalytic and reversible. It may occur as an alternative to other cysteine modifications, such as S-nitrosylation and S-palmitoylation.

Its subcellular location is the cytoplasm. It localises to the nucleus. P105 is the precursor of the active p50 subunit (Nuclear factor NF-kappa-B p50 subunit) of the nuclear factor NF-kappa-B. The precursor protein itself does not bind to DNA. Acts as a cytoplasmic retention of attached NF-kappa-B proteins by p105. In terms of biological role, constitutes the active form, which associates with RELA/p65 to form the NF-kappa-B p65-p50 complex to form a transcription factor. Together with RELA/p65, binds to the kappa-B consensus sequence 5'-GGRNNYYCC-3', located in the enhancer region of genes involved in immune response and acute phase reactions. The chain is Nuclear factor NF-kappa-B p105 subunit (NFKB1) from Gallus gallus (Chicken).